The sequence spans 853 residues: DNA mismatch repair protein MutS (853 aa).

Residue 614 to 621 (GPNMGGKS) participates in ATP binding.

It belongs to the DNA mismatch repair MutS family.

This protein is involved in the repair of mismatches in DNA. It is possible that it carries out the mismatch recognition step. This protein has a weak ATPase activity. This chain is DNA mismatch repair protein MutS, found in Escherichia coli O6:K15:H31 (strain 536 / UPEC).